Consider the following 239-residue polypeptide: Outer membrane protein PagN (239 aa).

A signal peptide spans 1 to 22 (MKNFFAVCIIPLVVAWSATASA). The Periplasmic segment spans residues 23 to 26 (KEGI). The chain crosses the membrane as a beta stranded span at residues 27–36 (YITGKAGTSV). Over 37 to 65 (VNVYGINSTFSQDEIVNGHATLPDRTKGV) the chain is Extracellular. A beta stranded membrane pass occupies residues 66 to 76 (FGGGVAIGYDF). Topologically, residues 77 to 81 (YDPFQ) are periplasmic. Residues 82–92 (LPVRLELDTTF) form a beta stranded membrane-spanning segment. Over 93 to 120 (RGETDAKGGQDIIAFGDPVHINVKNQVR) the chain is Extracellular. Residues 121 to 132 (MTTYMVNGYYDF) traverse the membrane as a beta stranded segment. Residues 133-137 (HNSTA) are Periplasmic-facing. Residues 138 to 148 (FTPYISAGVGL) traverse the membrane as a beta stranded segment. Residues 149 to 174 (AHVKLSNNTIPVGFGINETLSASKNN) are Extracellular-facing. Residues 175–185 (FAWGAGIGAKY) form a beta stranded membrane-spanning segment. Over 186-190 (AVTDN) the chain is Periplasmic. Residues 191 to 200 (IMIDASYKYI) traverse the membrane as a beta stranded segment. Topologically, residues 201-230 (NAGKVSISKNHYAGDEHTAYDADTKAASND) are extracellular. The chain crosses the membrane as a beta stranded span at residues 231–239 (FMLGITYAF).

The protein localises to the cell outer membrane. Functionally, haemagglutinin that facilitates the adhesion to and invasion of epithelial mammalian cells. Utilizes heparinated proteoglycan as a receptor to successfully invade host cells. The chain is Outer membrane protein PagN (pagN) from Salmonella typhimurium (strain LT2 / SGSC1412 / ATCC 700720).